Here is a 129-residue protein sequence, read N- to C-terminus: Glycerol-3-phosphate cytidylyltransferase (129 aa).

CTP contacts are provided by residues 9–10 (TF) and 14–17 (HYGH). Substrate is bound at residue Lys44. A CTP-binding site is contributed by Lys46. Residue Lys77 participates in substrate binding. 113–120 (RTDGISTT) contributes to the CTP binding site.

Belongs to the cytidylyltransferase family. Homodimer.

It is found in the cytoplasm. The enzyme catalyses sn-glycerol 3-phosphate + CTP + H(+) = CDP-glycerol + diphosphate. It participates in cell wall biogenesis; poly(ribitol phosphate) teichoic acid biosynthesis. Its function is as follows. Catalyzes the transfer of the cytidylyl group of CTP to sn-glycerol 3-phosphate so the activated glycerol 3-phosphate can be used for teichoic acid synthesis, via incorporation into both the linkage unit by TarB and TarF. The sequence is that of Glycerol-3-phosphate cytidylyltransferase (tarD) from Bacillus spizizenii (strain ATCC 23059 / NRRL B-14472 / W23) (Bacillus subtilis subsp. spizizenii).